The following is a 340-amino-acid chain: HPr kinase/phosphorylase (340 aa).

Catalysis depends on residues His153 and Lys174. Residue 168–175 (GRSGIGKS) coordinates ATP. Ser175 is a binding site for Mg(2+). The active-site Proton acceptor; for phosphorylation activity. Proton donor; for dephosphorylation activity is the Asp192. The important for the catalytic mechanism of both phosphorylation and dephosphorylation stretch occupies residues 216 to 225 (MEIRGLGIID). A Mg(2+)-binding site is contributed by Glu217. Arg258 is a catalytic residue. Residues 279-284 (PIYPGK) form an important for the catalytic mechanism of dephosphorylation region.

The protein belongs to the HPrK/P family. Homohexamer. Mg(2+) is required as a cofactor.

The enzyme catalyses [HPr protein]-L-serine + ATP = [HPr protein]-O-phospho-L-serine + ADP + H(+). The catalysed reaction is [HPr protein]-O-phospho-L-serine + phosphate + H(+) = [HPr protein]-L-serine + diphosphate. Functionally, catalyzes the ATP- as well as the pyrophosphate-dependent phosphorylation of a specific serine residue in HPr, a phosphocarrier protein of the phosphoenolpyruvate-dependent sugar phosphotransferase system (PTS). HprK/P also catalyzes the pyrophosphate-producing, inorganic phosphate-dependent dephosphorylation (phosphorolysis) of seryl-phosphorylated HPr (P-Ser-HPr). This Chloroherpeton thalassium (strain ATCC 35110 / GB-78) protein is HPr kinase/phosphorylase.